We begin with the raw amino-acid sequence, 413 residues long: Phosphopentomutase (413 aa).

The Mn(2+) site is built by Asp11, Asp306, His311, Asp347, His348, and His359.

The protein belongs to the phosphopentomutase family. The cofactor is Mn(2+).

Its subcellular location is the cytoplasm. The catalysed reaction is 2-deoxy-alpha-D-ribose 1-phosphate = 2-deoxy-D-ribose 5-phosphate. It catalyses the reaction alpha-D-ribose 1-phosphate = D-ribose 5-phosphate. It participates in carbohydrate degradation; 2-deoxy-D-ribose 1-phosphate degradation; D-glyceraldehyde 3-phosphate and acetaldehyde from 2-deoxy-alpha-D-ribose 1-phosphate: step 1/2. In terms of biological role, isomerase that catalyzes the conversion of deoxy-ribose 1-phosphate (dRib-1-P) and ribose 1-phosphate (Rib-1-P) to deoxy-ribose 5-phosphate (dRib-5-P) and ribose 5-phosphate (Rib-5-P), respectively. In Helicobacter pylori (strain Shi470), this protein is Phosphopentomutase.